We begin with the raw amino-acid sequence, 85 residues long: 4-hydroxyphenylacetate decarboxylase small subunit (85 aa).

[4Fe-4S] cluster-binding residues include histidine 4, cysteine 7, cysteine 20, cysteine 34, cysteine 43, cysteine 46, cysteine 60, and cysteine 78.

It belongs to the HPA decarboxylase small subunit family. As to quaternary structure, heterooctamer consisting of 4 large (HpdB) subunits and 4 small (HpdC) subunits, arranged as a tetramer of heterodimers. [4Fe-4S] cluster is required as a cofactor.

It catalyses the reaction 4-hydroxyphenylacetate + H(+) = 4-methylphenol + CO2. It carries out the reaction 3,4-dihydroxyphenylacetate + H(+) = 4-methylcatechol + CO2. In terms of biological role, component of the HPA decarboxylase that decarboxylates phenylacetates with a hydroxyl group in the p-position. Active toward 4-hydroxyphenylacetate and 3,4-dihydroxyphenylacetate, forming 4-methylphenol and 4-methylcatechol, respectively. Is likely involved in the catabolism of aromatic amino acids such as tyrosine fermentation. 4-methylphenol (p-cresol) formation provides metabolic toxicity, which allows an active suppression of other microbes and may provide growth advantages for the producers in highly competitive environments. The small subunit is essential for enzymatic activity of HPA decarboxylase, and also seems to be involved in the regulation of the enzyme oligomeric state and catalytic activity. This chain is 4-hydroxyphenylacetate decarboxylase small subunit, found in Clostridioides difficile (strain CD196) (Peptoclostridium difficile).